Consider the following 323-residue polypeptide: tRNA U34 carboxymethyltransferase (323 aa).

Carboxy-S-adenosyl-L-methionine contacts are provided by residues lysine 91, tryptophan 105, lysine 110, glycine 130, 152-154, 181-182, methionine 196, tyrosine 200, and arginine 315; these read DPT and IE.

Belongs to the class I-like SAM-binding methyltransferase superfamily. CmoB family. Homotetramer.

The enzyme catalyses carboxy-S-adenosyl-L-methionine + 5-hydroxyuridine(34) in tRNA = 5-carboxymethoxyuridine(34) in tRNA + S-adenosyl-L-homocysteine + H(+). Functionally, catalyzes carboxymethyl transfer from carboxy-S-adenosyl-L-methionine (Cx-SAM) to 5-hydroxyuridine (ho5U) to form 5-carboxymethoxyuridine (cmo5U) at position 34 in tRNAs. The polypeptide is tRNA U34 carboxymethyltransferase (Salmonella paratyphi A (strain ATCC 9150 / SARB42)).